Here is a 363-residue protein sequence, read N- to C-terminus: MNTWFLNVVDPLHQWFLGFGDIGVVLWTVLKILMIAIPLIVSVAFYVVWERKLIGWMHVRHGPMYVGMGLFQAFADVFKLLFKEVLYPSKAHKAIFVIAPLLTLAPSFAAWAVVPFDTKLVLSNANVGLLYLLAMTSLGVYGIILAGWASNSKYAFLGAMRSAAQVVSYEIAMGFALVGVMIAAGSLNLSQIVMAQAGSSGFFDWFLIPLFPLFIVYWVSGVAETNRSPFDVVEGESEIVAGHMVEYSGSVFALFFLAEYANMILVSFLISIFFLGGWLSPIQGWVSGQVSPLIDWVWNGGWPWLLFKVLFFASAYIWFRASFPRYRYDQIMRLGWKVFIPLTIVWIAVTALMVFSGVIQKGV.

Transmembrane regions (helical) follow at residues 62-82 (GPMY…KLLF), 94-114 (AIFV…WAVV), 127-147 (VGLL…ILAG), 166-186 (VVSY…AAGS), 202-222 (FFDW…VSGV), 239-257 (IVAG…LFFL), 264-286 (ILVS…QGWV), 293-313 (LIDW…LFFA), and 339-359 (FIPL…SGVI).

Belongs to the complex I subunit 1 family. NDH-1 is composed of 14 different subunits. Subunits NuoA, H, J, K, L, M, N constitute the membrane sector of the complex.

The protein resides in the cell inner membrane. The enzyme catalyses a quinone + NADH + 5 H(+)(in) = a quinol + NAD(+) + 4 H(+)(out). Its function is as follows. NDH-1 shuttles electrons from NADH, via FMN and iron-sulfur (Fe-S) centers, to quinones in the respiratory chain. The immediate electron acceptor for the enzyme in this species is believed to be ubiquinone. Couples the redox reaction to proton translocation (for every two electrons transferred, four hydrogen ions are translocated across the cytoplasmic membrane), and thus conserves the redox energy in a proton gradient. This subunit may bind ubiquinone. The protein is NADH-quinone oxidoreductase subunit H of Xylella fastidiosa (strain 9a5c).